The chain runs to 314 residues: Lipoyl synthase (314 aa).

[4Fe-4S] cluster is bound by residues Cys61, Cys66, Cys72, Cys87, Cys91, Cys94, and Ser301. A Radical SAM core domain is found at 73–290; sequence FGRGTATFMI…EEEAKKMGFS (218 aa).

This sequence belongs to the radical SAM superfamily. Lipoyl synthase family. The cofactor is [4Fe-4S] cluster.

The protein resides in the cytoplasm. It catalyses the reaction [[Fe-S] cluster scaffold protein carrying a second [4Fe-4S](2+) cluster] + N(6)-octanoyl-L-lysyl-[protein] + 2 oxidized [2Fe-2S]-[ferredoxin] + 2 S-adenosyl-L-methionine + 4 H(+) = [[Fe-S] cluster scaffold protein] + N(6)-[(R)-dihydrolipoyl]-L-lysyl-[protein] + 4 Fe(3+) + 2 hydrogen sulfide + 2 5'-deoxyadenosine + 2 L-methionine + 2 reduced [2Fe-2S]-[ferredoxin]. It functions in the pathway protein modification; protein lipoylation via endogenous pathway; protein N(6)-(lipoyl)lysine from octanoyl-[acyl-carrier-protein]: step 2/2. Its function is as follows. Catalyzes the radical-mediated insertion of two sulfur atoms into the C-6 and C-8 positions of the octanoyl moiety bound to the lipoyl domains of lipoate-dependent enzymes, thereby converting the octanoylated domains into lipoylated derivatives. In Dechloromonas aromatica (strain RCB), this protein is Lipoyl synthase.